The following is a 630-amino-acid chain: Low affinity heme transporter str3 (630 aa).

Residues 1 to 26 (MEAKETHSISDHEVELQDAKPEEKSE) are compositionally biased toward basic and acidic residues. The interval 1-51 (MEAKETHSISDHEVELQDAKPEEKSENGNFVFEKAFSSDEEKGSGYNTNET) is disordered. At 1–79 (MEAKETHSIS…VRDSIYQNKR (79 aa)) the chain is on the cytoplasmic side. Phosphoserine occurs at positions 10 and 38. Residues 80–100 (GMYLAYAFGIAILACSWASAI) traverse the membrane as a helical segment. Residues 101–120 (QSSTTYSYQVYATASFNRTS) are Extracellular-facing. A helical transmembrane segment spans residues 121–141 (MISTLEIATAIISSVCKPILG). At 142 to 154 (KFSDITSRPMTYT) the chain is on the cytoplasmic side. Residues 155–175 (LVLLFYVIGFIVVASSSTISA) form a helical membrane-spanning segment. A topological domain (extracellular) is located at residue Tyr-176. Residues 177–197 (VIGSVFISIGSSGLDYLNTLV) traverse the membrane as a helical segment. The Cytoplasmic portion of the chain corresponds to 198-208 (VGDLTSLKWRG). The chain crosses the membrane as a helical span at residues 209–229 (FMTALLSTPYIATVWFTGFIV). Topologically, residues 230–241 (QGIIDSNWRWGY) are extracellular. Residues 242–262 (GMFAIIMPAVMTPAVIILMYL) traverse the membrane as a helical segment. Residues 263 to 302 (ERQANKDENIKKIINYQTEEKNKNKQSKWQKLWKAVLEVD) are Cytoplasmic-facing. The helical transmembrane segment at 303 to 323 (LFGLILLGVGWSILLLPFSLT) threads the bilayer. Residues 324–335 (SYAKNGWKNPSM) are Extracellular-facing. The chain crosses the membrane as a helical span at residues 336–356 (IAMMVVGGVILIAYSGYEMFI). Over 357-370 (APYPSCPRRVMNRT) the chain is Cytoplasmic. The helical transmembrane segment at 371–391 (FITAVIIDFFYYLAGYLQSMY) threads the bilayer. The Extracellular portion of the chain corresponds to 392–406 (FTTYTWILYDWSYRD). The helical transmembrane segment at 407 to 427 (WTYFNNTMTIALCVFGVFAGA) threads the bilayer. Topologically, residues 428–439 (MHRVFHRYKYLQ) are cytoplasmic. A helical membrane pass occupies residues 440 to 460 (IIGLVIKIVGYGILIRPNFAA). Over 461 to 465 (TGKVD) the chain is Extracellular. Residues 466-486 (LAWSLILIGMGGSFSVVGSQV) traverse the membrane as a helical segment. The Cytoplasmic segment spans residues 487-502 (SCQASVPHQDLAIASS). A helical membrane pass occupies residues 503–523 (LLPLYTNIGGAIGAAIASPIF). The tract at residues 522-576 (IFSNKVPKYLREYLPSSINDTQVYNFYSDSSLIREYPVGTEIRDGAIKAYSRSMF) is heme binding. Residues 524–574 (SNKVPKYLREYLPSSINDTQVYNFYSDSSLIREYPVGTEIRDGAIKAYSRS) are Extracellular-facing. A helical transmembrane segment spans residues 575–595 (MFFLLVPAVSLSFIPLAAAFW). The Cytoplasmic portion of the chain corresponds to 596–630 (QSNFYLGNQQNAVEGDQDHKKKGDKETTQEEKIII). Residues 610–630 (GDQDHKKKGDKETTQEEKIII) are disordered. Residues 611–630 (DQDHKKKGDKETTQEEKIII) are compositionally biased toward basic and acidic residues.

This sequence belongs to the major facilitator superfamily.

Its subcellular location is the cell membrane. Its function is as follows. Low affinity heme transporter involved in the assimilation of exogenous heme during conditions of low cellular iron. The chain is Low affinity heme transporter str3 from Schizosaccharomyces pombe (strain 972 / ATCC 24843) (Fission yeast).